The following is a 641-amino-acid chain: 1-phosphatidylinositol 4,5-bisphosphate phosphodiesterase zeta-1 (641 aa).

The 36-residue stretch at 35 to 70 folds into the EF-hand domain; the sequence is CSYIHVKRIFKDNDRLKQGRITIEEFRAIYRILTHR. In terms of domain architecture, PI-PLC X-box spans 155–299; the sequence is QDMTHPLNDY…LKFKVLVKNK (145 aa). Active-site residues include His-170 and His-215. In terms of domain architecture, PI-PLC Y-box spans 382-498; the sequence is LSDLVIYTKA…GYILKPHFLR (117 aa). The C2 domain occupies 498 to 622; the sequence is RESESYFNPS…KGYRRVPLFS (125 aa).

In terms of assembly, interacts via its C2 domain with PtdIns(3)P and, to a lesser extent, PtdIns(5)P in vitro. Ca(2+) serves as cofactor.

Its subcellular location is the nucleus. It is found in the cytoplasm. The protein localises to the perinuclear region. It carries out the reaction a 1,2-diacyl-sn-glycero-3-phospho-(1D-myo-inositol-4,5-bisphosphate) + H2O = 1D-myo-inositol 1,4,5-trisphosphate + a 1,2-diacyl-sn-glycerol + H(+). Its function is as follows. The production of the second messenger molecules diacylglycerol (DAG) and inositol 1,4,5-trisphosphate (IP3) is mediated by activated phosphatidylinositol-specific phospholipase C enzymes. In vitro, hydrolyzes PtdIns(4,5)P2 in a Ca(2+)-dependent manner. Triggers intracellular Ca(2+) oscillations in oocytes solely during M phase and is involved in inducing oocyte activation and initiating embryonic development up to the blastocyst stage. Is therefore a strong candidate for the egg-activating soluble sperm factor that is transferred from the sperm into the egg cytoplasm following gamete membrane fusion. May exert an inhibitory effect on phospholipase-C-coupled processes that depend on calcium ions and protein kinase C, including CFTR trafficking and function. The chain is 1-phosphatidylinositol 4,5-bisphosphate phosphodiesterase zeta-1 from Macaca fascicularis (Crab-eating macaque).